The following is a 23-amino-acid chain: Basic phospholipase A2 CTs-G6 (23 aa).

Ca(2+) serves as cofactor. Contains 7 disulfide bonds. As to expression, expressed by the venom gland.

It localises to the secreted. It catalyses the reaction a 1,2-diacyl-sn-glycero-3-phosphocholine + H2O = a 1-acyl-sn-glycero-3-phosphocholine + a fatty acid + H(+). Its function is as follows. Snake venom phospholipase A2 (PLA2) that induces local edema a few hours after injection (5-10 ug) in the hind paw. PLA2 catalyzes the calcium-dependent hydrolysis of the 2-acyl groups in 3-sn-phosphoglycerides. The sequence is that of Basic phospholipase A2 CTs-G6 from Trimeresurus stejnegeri (Chinese green tree viper).